We begin with the raw amino-acid sequence, 508 residues long: D-alanine--D-alanyl carrier protein ligase (508 aa).

152–153 (TS) provides a ligand contact to ATP. D198 contacts D-alanine. 293-298 (NTYGPT) serves as a coordination point for ATP. D-alanine is bound at residue V302. Residues D384, 396–399 (YRGR), and K495 contribute to the ATP site. K495 serves as a coordination point for D-alanine.

Belongs to the ATP-dependent AMP-binding enzyme family. DltA subfamily.

The protein resides in the cytoplasm. The catalysed reaction is holo-[D-alanyl-carrier protein] + D-alanine + ATP = D-alanyl-[D-alanyl-carrier protein] + AMP + diphosphate. It functions in the pathway cell wall biogenesis; lipoteichoic acid biosynthesis. Catalyzes the first step in the D-alanylation of lipoteichoic acid (LTA), the activation of D-alanine and its transfer onto the D-alanyl carrier protein (Dcp) DltC. In an ATP-dependent two-step reaction, forms a high energy D-alanyl-AMP intermediate, followed by transfer of the D-alanyl residue as a thiol ester to the phosphopantheinyl prosthetic group of the Dcp. D-alanylation of LTA plays an important role in modulating the properties of the cell wall in Gram-positive bacteria, influencing the net charge of the cell wall. The polypeptide is D-alanine--D-alanyl carrier protein ligase (Lactiplantibacillus plantarum (strain ATCC BAA-793 / NCIMB 8826 / WCFS1) (Lactobacillus plantarum)).